A 132-amino-acid polypeptide reads, in one-letter code: Large ribosomal subunit protein bL17 (132 aa).

The protein belongs to the bacterial ribosomal protein bL17 family. Part of the 50S ribosomal subunit. Contacts protein L32.

This is Large ribosomal subunit protein bL17 from Ehrlichia canis (strain Jake).